The primary structure comprises 372 residues: G patch domain and ankyrin repeat-containing protein 1 (372 aa).

The tract at residues 74 to 110 (DSSSSKPQRAEPMRERKKKRRRVTREPAAAGVPRQGR) is disordered. ANK repeat units follow at residues 124-155 (LAAQNGDLTELRRLLEPQEAGGAGGNINARDA) and 156-186 (FWWTPLMCAARAGQGAAVRYLLGRGAAWVGV). Disordered regions lie at residues 211–233 (RESHGETRSPENQNRSTPSSSQF) and 251–271 (AHLLSLSRRPQPSNLPLGVPT). The segment covering 220–233 (PENQNRSTPSSSQF) has biased composition (polar residues). The region spanning 271–317 (TSSPGFRLLLRGGWEPGMGLGPRGEGRANPIPTILKRDQEGLGYRSP) is the G-patch domain. Residue Lys306 forms a Glycyl lysine isopeptide (Lys-Gly) (interchain with G-Cter in SUMO2) linkage. Composition is skewed to basic and acidic residues over residues 330–340 (TRAVSGRERVP) and 348–357 (RENRRQEEKG). The disordered stretch occupies residues 330–357 (TRAVSGRERVPRVATLSQRENRRQEEKG).

The sequence is that of G patch domain and ankyrin repeat-containing protein 1 (Gpank1) from Mus musculus (Mouse).